The sequence spans 229 residues: 2,3-bisphosphoglycerate-dependent phosphoglycerate mutase (229 aa).

Substrate-binding positions include 7–14 (RHGQSEWN), 20–21 (TG), arginine 59, 86–89 (ERHY), lysine 97, 113–114 (RR), and 182–183 (GN). The active-site Tele-phosphohistidine intermediate is the histidine 8. The active-site Proton donor/acceptor is the glutamate 86.

The protein belongs to the phosphoglycerate mutase family. BPG-dependent PGAM subfamily.

It carries out the reaction (2R)-2-phosphoglycerate = (2R)-3-phosphoglycerate. It functions in the pathway carbohydrate degradation; glycolysis; pyruvate from D-glyceraldehyde 3-phosphate: step 3/5. In terms of biological role, catalyzes the interconversion of 2-phosphoglycerate and 3-phosphoglycerate. The polypeptide is 2,3-bisphosphoglycerate-dependent phosphoglycerate mutase (Listeria monocytogenes serotype 4a (strain HCC23)).